The primary structure comprises 238 residues: Leucine-rich repeat-containing protein 57 (238 aa).

LRR repeat units lie at residues 10-36, 37-62, 64-82, 83-106, 108-128, 129-152, 154-173, and 174-199; these read LETS…LQKL, TANL…SFQH, KSFT…DIGK, LKKL…IGQL, SLRT…GLGT, LRQL…VAEL, AIEI…EVSR, and TPRL…ILTD.

The polypeptide is Leucine-rich repeat-containing protein 57 (lrrc57) (Danio rerio (Zebrafish)).